The chain runs to 1627 residues: Surface protein G (1627 aa).

An N-terminal signal peptide occupies residues Met1–Ala50. Residues Tyr22 to Ser33 carry the YSIRK-G/S signaling motif motif. A ligand binding A region, squamous nasal epithelial cell binding region spans residues Ala51–Glu418. 3 disordered regions span residues Glu74–Ala143, Lys440–Thr467, and Glu496–Glu1601. Composition is skewed to basic and acidic residues over residues Asp96–Ala120, Lys451–Lys461, Gly505–Pro523, Ser554–Asn570, Lys579–Lys589, Ser606–Ile619, Gly633–Pro651, Ser682–Asn698, Lys707–Lys717, Gly736–Ile747, Gly761–Pro779, Ser810–Asn826, Lys835–Lys845, Ser862–Ile875, Gly889–Pro907, Ser938–Asn954, Lys963–Lys973, Ser990–Ile1003, Gly1017–Pro1035, Ser1066–Asn1082, Lys1091–Lys1101, Ser1118–Ile1131, Gly1145–Pro1163, Ser1194–Asn1210, Lys1219–Lys1229, Ser1246–Ile1259, Gly1273–Pro1291, Ser1322–Asn1338, Lys1347–Lys1357, Ser1374–Val1387, Lys1431–Lys1442, and Phe1459–Gln1478. Residues Ala419–Thr501 enclose the G5 1 domain. Residues Tyr547–Thr629 enclose the G5 2 domain. The region spanning Tyr675–Thr757 is the G5 3 domain. Positions Tyr803–Thr885 constitute a G5 4 domain. Residues Tyr931–Thr1013 enclose the G5 5 domain. In terms of domain architecture, G5 6 spans Tyr1059–Thr1141. Residues Tyr1187–Thr1269 form the G5 7 domain. Residues Tyr1315–Lys1397 enclose the G5 8 domain. Residues His1443–Lys1525 enclose the G5 9 domain. A compositionally biased stretch (polar residues) spans Gln1481–Pro1495. Positions Glu1509–Ser1539 are enriched in basic and acidic residues. Positions Leu1595–Gly1599 match the LPXTG sorting signal motif. Pentaglycyl murein peptidoglycan amidated threonine is present on Thr1598. Positions Gly1599 to Asn1627 are cleaved as a propeptide — removed by sortase.

The protein localises to the secreted. The protein resides in the cell wall. In terms of biological role, promotes adhesion of bacterial cells to human squamous nasal epithelial cells, a phenomenon which is likely to be important in nasal colonization. Forms short, extremely dense and thin fibrils all over the bacterial surface. Does not bind to either buccal cells or non-differentiated keratinocytes. Promotes cellular aggregation leading to biofilm formation. In Staphylococcus aureus (strain NCTC 8325 / PS 47), this protein is Surface protein G (sasG).